The sequence spans 414 residues: Gamma-glutamyl phosphate reductase (414 aa).

It belongs to the gamma-glutamyl phosphate reductase family.

It localises to the cytoplasm. It carries out the reaction L-glutamate 5-semialdehyde + phosphate + NADP(+) = L-glutamyl 5-phosphate + NADPH + H(+). It functions in the pathway amino-acid biosynthesis; L-proline biosynthesis; L-glutamate 5-semialdehyde from L-glutamate: step 2/2. Catalyzes the NADPH-dependent reduction of L-glutamate 5-phosphate into L-glutamate 5-semialdehyde and phosphate. The product spontaneously undergoes cyclization to form 1-pyrroline-5-carboxylate. This Xanthomonas axonopodis pv. citri (strain 306) protein is Gamma-glutamyl phosphate reductase.